We begin with the raw amino-acid sequence, 436 residues long: ATP-sensitive inward rectifier potassium channel 14 (436 aa).

The Cytoplasmic portion of the chain corresponds to Met-1 to Asp-83. The segment at Leu-14–Ser-43 is disordered. An S-nitrosocysteine modification is found at Cys-81. The chain crosses the membrane as a helical span at residues Val-84–Leu-110. Residues Ile-111 to Ser-133 lie on the Extracellular side of the membrane. Positions Phe-134 to Tyr-150 form an intramembrane region, helical; Pore-forming. The Selectivity filter signature appears at Ser-147 to Val-152. Residues Gly-151–Cys-159 are Extracellular-facing. A helical membrane pass occupies residues Pro-160–Lys-187. At Met-188–Pro-436 the chain is on the cytoplasmic side. Over residues Gln-400–Asp-418 the composition is skewed to acidic residues. A disordered region spans residues Gln-400–Pro-436. The span at Leu-426–Pro-436 shows a compositional bias: low complexity.

The protein belongs to the inward rectifier-type potassium channel (TC 1.A.2.1) family. KCNJ14 subfamily. As to expression, expressed preferentially in retina.

The protein localises to the membrane. It carries out the reaction K(+)(in) = K(+)(out). With respect to regulation, channel activity is regulated by variations of cytosolic pH; channels are activated by alkaline and inhibited by acidic pH values. Inhibited by Ba(2+) and Cs(+) in a voltage-dependent manner; sensitivity to those inhibitors is lower than in other Kir channels. Inward rectifier potassium channels are characterized by a greater tendency to allow potassium to flow into the cell rather than out of it. Their voltage dependence is regulated by the concentration of extracellular potassium; as external potassium is raised, the voltage range of the channel opening shifts to more positive voltages. The polypeptide is ATP-sensitive inward rectifier potassium channel 14 (KCNJ14) (Homo sapiens (Human)).